A 456-amino-acid polypeptide reads, in one-letter code: 3-isopropylmalate dehydratase large subunit (456 aa).

The [4Fe-4S] cluster site is built by Cys336, Cys396, and Cys399.

This sequence belongs to the aconitase/IPM isomerase family. LeuC type 1 subfamily. Heterodimer of LeuC and LeuD. [4Fe-4S] cluster is required as a cofactor.

It carries out the reaction (2R,3S)-3-isopropylmalate = (2S)-2-isopropylmalate. Its pathway is amino-acid biosynthesis; L-leucine biosynthesis; L-leucine from 3-methyl-2-oxobutanoate: step 2/4. In terms of biological role, catalyzes the isomerization between 2-isopropylmalate and 3-isopropylmalate, via the formation of 2-isopropylmaleate. The sequence is that of 3-isopropylmalate dehydratase large subunit from Staphylococcus aureus (strain JH1).